The chain runs to 209 residues: Uracil phosphoribosyltransferase (209 aa).

Residues Arg-79, Arg-104, and 131 to 139 contribute to the 5-phospho-alpha-D-ribose 1-diphosphate site; that span reads DPMLATGGT. Residues Ile-194 and 199–201 each bind uracil; that span reads GDA. A 5-phospho-alpha-D-ribose 1-diphosphate-binding site is contributed by Asp-200.

The protein belongs to the UPRTase family. The cofactor is Mg(2+).

The catalysed reaction is UMP + diphosphate = 5-phospho-alpha-D-ribose 1-diphosphate + uracil. It participates in pyrimidine metabolism; UMP biosynthesis via salvage pathway; UMP from uracil: step 1/1. Its activity is regulated as follows. Allosterically activated by GTP. In terms of biological role, catalyzes the conversion of uracil and 5-phospho-alpha-D-ribose 1-diphosphate (PRPP) to UMP and diphosphate. This chain is Uracil phosphoribosyltransferase, found in Pseudoalteromonas translucida (strain TAC 125).